A 594-amino-acid polypeptide reads, in one-letter code: Probable translation initiation factor IF-2 (594 aa).

One can recognise a tr-type G domain in the interval Tyr5–Val224. Residues Gly14–Thr21 are G1. Gly14–Thr21 is a GTP binding site. Residues Met39–His43 form a G2 region. A G3 region spans residues Asp80–Gly83. GTP-binding positions include Asp80–His84 and Asn134–Asp137. A G4 region spans residues Asn134–Asp137. The tract at residues Ser202–Val204 is G5.

This sequence belongs to the TRAFAC class translation factor GTPase superfamily. Classic translation factor GTPase family. IF-2 subfamily.

Function in general translation initiation by promoting the binding of the formylmethionine-tRNA to ribosomes. Seems to function along with eIF-2. The sequence is that of Probable translation initiation factor IF-2 from Caldivirga maquilingensis (strain ATCC 700844 / DSM 13496 / JCM 10307 / IC-167).